Reading from the N-terminus, the 184-residue chain is Peptidyl-tRNA hydrolase (184 aa).

Tyrosine 14 is a tRNA binding site. The active-site Proton acceptor is the histidine 19. Phenylalanine 60 and asparagine 62 together coordinate tRNA.

It belongs to the PTH family. In terms of assembly, monomer.

It is found in the cytoplasm. It carries out the reaction an N-acyl-L-alpha-aminoacyl-tRNA + H2O = an N-acyl-L-amino acid + a tRNA + H(+). In terms of biological role, hydrolyzes ribosome-free peptidyl-tRNAs (with 1 or more amino acids incorporated), which drop off the ribosome during protein synthesis, or as a result of ribosome stalling. Its function is as follows. Catalyzes the release of premature peptidyl moieties from peptidyl-tRNA molecules trapped in stalled 50S ribosomal subunits, and thus maintains levels of free tRNAs and 50S ribosomes. In Mesomycoplasma hyopneumoniae (strain 232) (Mycoplasma hyopneumoniae), this protein is Peptidyl-tRNA hydrolase.